A 31-amino-acid chain; its full sequence is GTIPCGESCVFIPCLTSALGCSCKSKVCYKN.

Residues 1-31 constitute a cross-link (cyclopeptide (Gly-Asn)); sequence GTIPCGESCVFIPCLTSALGCSCKSKVCYKN. Intrachain disulfides connect Cys5/Cys21, Cys9/Cys23, and Cys14/Cys28.

Post-translationally, this is a cyclic peptide.

Probably participates in a plant defense mechanism. In Viola biflora (Yellow wood violet), this protein is Cyclotide vibi-F.